The sequence spans 491 residues: Chromosomal replication initiator protein DnaA (491 aa).

The tract at residues 1–69 (MTTWDKCLKK…TIQECHGNDL (69 aa)) is domain I, interacts with DnaA modulators. The domain II stretch occupies residues 69 to 154 (LIIEYSNKKF…KEDEEYSFGL (86 aa)). The interval 155-371 (PLKEKYVFDS…GALNRVLTTS (217 aa)) is domain III, AAA+ region. Residues G199, G201, K202, and T203 each coordinate ATP. The tract at residues 372-491 (KFNHKDPTIE…YELLLDKISR (120 aa)) is domain IV, binds dsDNA.

The protein belongs to the DnaA family. Oligomerizes as a right-handed, spiral filament on DNA at oriC.

It is found in the cytoplasm. Plays an essential role in the initiation and regulation of chromosomal replication. ATP-DnaA binds to the origin of replication (oriC) to initiate formation of the DNA replication initiation complex once per cell cycle. Binds the DnaA box (a 9 base pair repeat at the origin) and separates the double-stranded (ds)DNA. Forms a right-handed helical filament on oriC DNA; dsDNA binds to the exterior of the filament while single-stranded (ss)DNA is stabiized in the filament's interior. The ATP-DnaA-oriC complex binds and stabilizes one strand of the AT-rich DNA unwinding element (DUE), permitting loading of DNA polymerase. After initiation quickly degrades to an ADP-DnaA complex that is not apt for DNA replication. Binds acidic phospholipids. The sequence is that of Chromosomal replication initiator protein DnaA from Francisella tularensis subsp. novicida (strain U112).